The chain runs to 348 residues: Protein-glutamate methylesterase/protein-glutamine glutaminase 2 (348 aa).

Residues 5–122 (KVLIIDDSAL…DLGLSQYRDE (118 aa)) form the Response regulatory domain. The residue at position 56 (aspartate 56) is a 4-aspartylphosphate. In terms of domain architecture, CheB-type methylesterase spans 157 to 348 (SLKTGFLCAI…AANIIKHALK (192 aa)). Residues serine 169, histidine 195, and aspartate 291 contribute to the active site.

It belongs to the CheB family. Post-translationally, phosphorylated by CheA. Phosphorylation of the N-terminal regulatory domain activates the methylesterase activity.

The protein resides in the cytoplasm. It carries out the reaction [protein]-L-glutamate 5-O-methyl ester + H2O = L-glutamyl-[protein] + methanol + H(+). It catalyses the reaction L-glutaminyl-[protein] + H2O = L-glutamyl-[protein] + NH4(+). Involved in chemotaxis. Part of a chemotaxis signal transduction system that modulates chemotaxis in response to various stimuli. Catalyzes the demethylation of specific methylglutamate residues introduced into the chemoreceptors (methyl-accepting chemotaxis proteins or MCP) by CheR. Also mediates the irreversible deamidation of specific glutamine residues to glutamic acid. The polypeptide is Protein-glutamate methylesterase/protein-glutamine glutaminase 2 (Saccharophagus degradans (strain 2-40 / ATCC 43961 / DSM 17024)).